Here is a 519-residue protein sequence, read N- to C-terminus: MIOREX complex component 12 (519 aa).

A mitochondrion-targeting transit peptide spans methionine 1–histidine 35.

As to quaternary structure, associates with the mitochondrial ribosome.

It is found in the mitochondrion. In terms of biological role, component of MIOREX complexes, large expressome-like assemblies of ribosomes with factors involved in all the steps of post-transcriptional gene expression. In Saccharomyces cerevisiae (strain ATCC 204508 / S288c) (Baker's yeast), this protein is MIOREX complex component 12.